The primary structure comprises 271 residues: MAASSLSSATSYLHSFRRRNSCVSLQGVSDMECNIARTNVSVWRSSANYVRMDCGVKKFSGKAVVVKQLQNRAGTFRCATMEEVEAEKSLIETNTKQRMEKTIETIRSNFNSVRTNRASPTMLDRIEVEYYGTPVSLKSIAQISTPDASSLLISPYDKSSLKAIEKAIVTSQLGVSPNNDGEVIRLSLPPLTSDRRKELAKVVSKLAEEGKVAVRNIRRDALKSYEKLEKEKKLSEDNVKDLSADLQKLTDEYMKKVESIYKQKEQELMKV.

The N-terminal 78 residues, 1–78, are a transit peptide targeting the chloroplast; that stretch reads MAASSLSSAT…LQNRAGTFRC (78 aa). The stretch at 213 to 260 forms a coiled coil; the sequence is AVRNIRRDALKSYEKLEKEKKLSEDNVKDLSADLQKLTDEYMKKVESI.

The protein belongs to the RRF family. Modeling onto the 70S ribosome suggests it binds to PSRP1. In terms of tissue distribution, restricted to photosynthetic tissues.

The protein localises to the plastid. It is found in the chloroplast stroma. Responsible for the release of ribosomes from messenger RNA at the termination of chloroplastic protein biosynthesis. This is Ribosome-recycling factor, chloroplastic (RRF) from Spinacia oleracea (Spinach).